The primary structure comprises 1058 residues: SMC5-SMC6 complex localization factor protein 1 (1058 aa).

BRCT domains follow at residues 12–77 (MTGF…IHSA) and 119–196 (GAPG…GDFL). The interval 410–1058 (PRGVLNLIES…MMCRSVMEFS (649 aa)) is NSE5-like domain; mediates interaction with SLF2. ANK repeat units lie at residues 806-836 (KGET…DINV), 840-869 (AGWT…EVDL), and 874-903 (DGVT…PVLL). A Glycyl lysine isopeptide (Lys-Gly) (interchain with G-Cter in SUMO2) cross-link involves residue lysine 931.

Interacts (via N-terminus) with SLF2; this interaction links RAD18 to the SMC5-SMC6 complex. Interacts (via BRCT domains) with RAD18; this interaction occurs in a SLF2-independent manner. Interacts with SMC6. Interacts (via BRCT domains) with RAD18 (via C-terminus and phosphorylated form); this interaction is required for efficient repair of UV-induced DNA damage.

Its subcellular location is the nucleus. It localises to the cytoplasm. The protein resides in the cytoskeleton. It is found in the microtubule organizing center. The protein localises to the centrosome. In terms of biological role, plays a role in the DNA damage response (DDR) pathway by regulating postreplication repair of UV-damaged DNA and genomic stability maintenance. The SLF1-SLF2 complex acts to link RAD18 with the SMC5-SMC6 complex at replication-coupled interstrand cross-links (ICL) and DNA double-strand breaks (DSBs) sites on chromatin during DNA repair in response to stalled replication forks. Promotes the recruitment of SLF2 and the SMC5-SMC6 complex to DNA lesions. The protein is SMC5-SMC6 complex localization factor protein 1 of Homo sapiens (Human).